We begin with the raw amino-acid sequence, 527 residues long: Eukaryotic translation initiation factor 3 subunit D (527 aa).

The interval 100–136 (QQNKRGGSNAGGRGGRGGMRGGRFGSNNKYWNDRRQR) is disordered. Positions 107–123 (SNAGGRGGRGGMRGGRF) are enriched in gly residues. The interval 264-277 (SEHLTVNENLTAHH) is RNA gate. The disordered stretch occupies residues 503-527 (DQIEEETQEEEEEEQSKGWVEESRE). Positions 504–516 (QIEEETQEEEEEE) are enriched in acidic residues. Basic and acidic residues predominate over residues 517–527 (QSKGWVEESRE).

This sequence belongs to the eIF-3 subunit D family. In terms of assembly, component of the eukaryotic translation initiation factor 3 (eIF-3) complex.

Its subcellular location is the cytoplasm. In terms of biological role, mRNA cap-binding component of the eukaryotic translation initiation factor 3 (eIF-3) complex, which is involved in protein synthesis of a specialized repertoire of mRNAs and, together with other initiation factors, stimulates binding of mRNA and methionyl-tRNAi to the 40S ribosome. The eIF-3 complex specifically targets and initiates translation of a subset of mRNAs involved in cell proliferation. In the eIF-3 complex, eif3d specifically recognizes and binds the 7-methylguanosine cap of a subset of mRNAs. This chain is Eukaryotic translation initiation factor 3 subunit D (eif3d), found in Dictyostelium discoideum (Social amoeba).